The sequence spans 332 residues: MARILDNDVMGNEEFSDRTLRPQYLREYIGQDKVKEQFAIFIEAAKRRDESLDHVLLFGPPGLGKTTMAFVIANELGVNLKQTSGPAVEKAGDLVAILNELEPGDILFIDEIHRMPMSVEEVLYSAMEDFYIDIMIGAGDTSRSIHLDLPPFTLIGATTRAGMLSNPLRARFGITGHMEYYQEKDLTEIVERTATIFEIKIDHEAARKLACRSRGTPRIANRLLKRVRDYAQIIGDGIITAQITDRALTMLDVDREGLDYIDQKILRTMIEMYQGGPVGLGTLSVNIAEERNTVEEMYEPYLIQKGFLMRTRTGRVATQKAYRHLGYPYQNT.

Residues 1-181 are large ATPase domain (RuvB-L); that stretch reads MARILDNDVM…FGITGHMEYY (181 aa). Residues L20, R21, G62, K65, T66, T67, 128 to 130, R171, Y181, and R218 each bind ATP; that span reads EDF. Residue T66 participates in Mg(2+) binding. The tract at residues 182 to 252 is small ATPAse domain (RuvB-S); sequence QEKDLTEIVE…ITDRALTMLD (71 aa). Residues 255–332 form a head domain (RuvB-H) region; it reads REGLDYIDQK…RHLGYPYQNT (78 aa). DNA-binding residues include R291, R310, R312, and R315.

This sequence belongs to the RuvB family. Homohexamer. Forms an RuvA(8)-RuvB(12)-Holliday junction (HJ) complex. HJ DNA is sandwiched between 2 RuvA tetramers; dsDNA enters through RuvA and exits via RuvB. An RuvB hexamer assembles on each DNA strand where it exits the tetramer. Each RuvB hexamer is contacted by two RuvA subunits (via domain III) on 2 adjacent RuvB subunits; this complex drives branch migration. In the full resolvosome a probable DNA-RuvA(4)-RuvB(12)-RuvC(2) complex forms which resolves the HJ.

The protein localises to the cytoplasm. The catalysed reaction is ATP + H2O = ADP + phosphate + H(+). In terms of biological role, the RuvA-RuvB-RuvC complex processes Holliday junction (HJ) DNA during genetic recombination and DNA repair, while the RuvA-RuvB complex plays an important role in the rescue of blocked DNA replication forks via replication fork reversal (RFR). RuvA specifically binds to HJ cruciform DNA, conferring on it an open structure. The RuvB hexamer acts as an ATP-dependent pump, pulling dsDNA into and through the RuvAB complex. RuvB forms 2 homohexamers on either side of HJ DNA bound by 1 or 2 RuvA tetramers; 4 subunits per hexamer contact DNA at a time. Coordinated motions by a converter formed by DNA-disengaged RuvB subunits stimulates ATP hydrolysis and nucleotide exchange. Immobilization of the converter enables RuvB to convert the ATP-contained energy into a lever motion, pulling 2 nucleotides of DNA out of the RuvA tetramer per ATP hydrolyzed, thus driving DNA branch migration. The RuvB motors rotate together with the DNA substrate, which together with the progressing nucleotide cycle form the mechanistic basis for DNA recombination by continuous HJ branch migration. Branch migration allows RuvC to scan DNA until it finds its consensus sequence, where it cleaves and resolves cruciform DNA. This is Holliday junction branch migration complex subunit RuvB from Streptococcus pyogenes serotype M12 (strain MGAS9429).